The following is a 689-amino-acid chain: DNA topoisomerase 1 (689 aa).

The 111-residue stretch at 3–113 (DNLVIVESPA…KENRVVFNEI (111 aa)) folds into the Toprim domain. Glu-9 and Asp-82 together coordinate Mg(2+). A Topo IA-type catalytic domain is found at 129 to 557 (EMNLVDAQQA…FFSSFKQDVE (429 aa)). An interaction with DNA region spans residues 163-168 (SAGRVQ). The O-(5'-phospho-DNA)-tyrosine intermediate role is filled by Tyr-298. A disordered region spans residues 328–357 (SKRKASGKQGDQDAHEAIRPSSTMRTPDDM). 3 C4-type zinc fingers span residues 577 to 603 (CEVC…FPDC), 617 to 645 (CPKC…YPEC), and 658 to 681 (CPKC…CSNC).

Belongs to the type IA topoisomerase family. Monomer. Mg(2+) is required as a cofactor.

The catalysed reaction is ATP-independent breakage of single-stranded DNA, followed by passage and rejoining.. Releases the supercoiling and torsional tension of DNA, which is introduced during the DNA replication and transcription, by transiently cleaving and rejoining one strand of the DNA duplex. Introduces a single-strand break via transesterification at a target site in duplex DNA. The scissile phosphodiester is attacked by the catalytic tyrosine of the enzyme, resulting in the formation of a DNA-(5'-phosphotyrosyl)-enzyme intermediate and the expulsion of a 3'-OH DNA strand. The free DNA strand then undergoes passage around the unbroken strand, thus removing DNA supercoils. Finally, in the religation step, the DNA 3'-OH attacks the covalent intermediate to expel the active-site tyrosine and restore the DNA phosphodiester backbone. The polypeptide is DNA topoisomerase 1 (Staphylococcus aureus (strain N315)).